The following is a 44-amino-acid chain: Somatoliberin (44 aa).

Position 44 is a leucine amide (L44).

Belongs to the glucagon family.

It is found in the secreted. Its function is as follows. GRF is released by the hypothalamus and acts on the adenohypophyse to stimulate the secretion of growth hormone. This chain is Somatoliberin (GHRH), found in Ovis aries (Sheep).